The chain runs to 164 residues: 2-C-methyl-D-erythritol 2,4-cyclodiphosphate synthase (164 aa).

The a divalent metal cation site is built by D9 and H11. 4-CDP-2-C-methyl-D-erythritol 2-phosphate-binding positions include 9 to 11 (DVH) and 35 to 36 (HS). H43 provides a ligand contact to a divalent metal cation. 4-CDP-2-C-methyl-D-erythritol 2-phosphate contacts are provided by residues 57–59 (DIG), 62–66 (FPDTD), 133–136 (TTTE), F140, and R143.

The protein belongs to the IspF family. Homotrimer. A divalent metal cation serves as cofactor.

The catalysed reaction is 4-CDP-2-C-methyl-D-erythritol 2-phosphate = 2-C-methyl-D-erythritol 2,4-cyclic diphosphate + CMP. Its pathway is isoprenoid biosynthesis; isopentenyl diphosphate biosynthesis via DXP pathway; isopentenyl diphosphate from 1-deoxy-D-xylulose 5-phosphate: step 4/6. Its function is as follows. Involved in the biosynthesis of isopentenyl diphosphate (IPP) and dimethylallyl diphosphate (DMAPP), two major building blocks of isoprenoid compounds. Catalyzes the conversion of 4-diphosphocytidyl-2-C-methyl-D-erythritol 2-phosphate (CDP-ME2P) to 2-C-methyl-D-erythritol 2,4-cyclodiphosphate (ME-CPP) with a corresponding release of cytidine 5-monophosphate (CMP). This chain is 2-C-methyl-D-erythritol 2,4-cyclodiphosphate synthase, found in Syntrophotalea carbinolica (strain DSM 2380 / NBRC 103641 / GraBd1) (Pelobacter carbinolicus).